Here is a 197-residue protein sequence, read N- to C-terminus: Peptidyl-tRNA hydrolase (197 aa).

Tyrosine 18 serves as a coordination point for tRNA. Histidine 23 serves as the catalytic Proton acceptor. Residues tyrosine 68, asparagine 70, and asparagine 116 each coordinate tRNA.

This sequence belongs to the PTH family. In terms of assembly, monomer.

It is found in the cytoplasm. It carries out the reaction an N-acyl-L-alpha-aminoacyl-tRNA + H2O = an N-acyl-L-amino acid + a tRNA + H(+). Functionally, hydrolyzes ribosome-free peptidyl-tRNAs (with 1 or more amino acids incorporated), which drop off the ribosome during protein synthesis, or as a result of ribosome stalling. In terms of biological role, catalyzes the release of premature peptidyl moieties from peptidyl-tRNA molecules trapped in stalled 50S ribosomal subunits, and thus maintains levels of free tRNAs and 50S ribosomes. The protein is Peptidyl-tRNA hydrolase of Desulfotalea psychrophila (strain LSv54 / DSM 12343).